Reading from the N-terminus, the 375-residue chain is Squamosa promoter-binding-like protein 9 (375 aa).

2 disordered regions span residues 1–30 (MEMGSNSGPGHGPGQAESGGSSTESSSFSG) and 43–73 (GGGGSGSSSSGGRSNRRVRGGGSGQSGQIPR). Residues 18–30 (SGGSSTESSSFSG) are compositionally biased toward low complexity. The SBP-type zinc-finger motif lies at 71–148 (IPRCQVEGCG…AGHNERRRKP (78 aa)). Zn(2+) is bound by residues cysteine 74, cysteine 79, cysteine 96, histidine 99, cysteine 115, cysteine 118, histidine 122, and cysteine 134. The Bipartite nuclear localization signal motif lies at 131–147 (KRSCRRRLAGHNERRRK). 2 disordered regions span residues 252-278 (LLSNPHQPHDNNNNNNNNNNNNNNTWR) and 345-375 (SDHHHQSRRQYMEDENTRAYDSSSHHTNWSL). Residues 262–275 (NNNNNNNNNNNNNN) show a composition bias toward low complexity. A compositionally biased stretch (basic and acidic residues) spans 345 to 362 (SDHHHQSRRQYMEDENTR). A compositionally biased stretch (polar residues) spans 363–375 (AYDSSSHHTNWSL).

Zn(2+) is required as a cofactor.

Its subcellular location is the nucleus. It localises to the cytoplasm. Trans-acting factor that binds specifically to the consensus nucleotide sequence 5'-TNCGTACAA-3'. This Arabidopsis thaliana (Mouse-ear cress) protein is Squamosa promoter-binding-like protein 9 (SPL9).